Reading from the N-terminus, the 582-residue chain is Hemagglutinin-neuraminidase (582 aa).

Over 1 to 34 the chain is Intravirion; it reads MEPSKLFTMSDNATFAPGPVVNAADKKTFRTCFR. Residues 35–55 form a helical membrane-spanning segment; sequence ILVLSVQAVTLILVIVTLGEL. The Virion surface segment spans residues 56-582; sequence VRMINDQGLS…LPVLTRLTIT (527 aa). 3 disulfide bridges follow: C178–C202, C192–C253, and C244–C257. N284 and N329 each carry an N-linked (GlcNAc...) asparagine; by host glycan. Disulfide bonds link C350–C471, C382–C392, and C465–C475. N-linked (GlcNAc...) asparagine; by host glycosylation is found at N400 and N448. N507 carries an N-linked (GlcNAc...) asparagine; by host glycan. Residues C545 and C556 are joined by a disulfide bond.

The protein belongs to the paramyxoviruses hemagglutinin-neuraminidase family. Homotetramer; composed of disulfide-linked homodimers. Interacts with F protein trimer.

The protein resides in the virion membrane. It is found in the host cell membrane. The enzyme catalyses Hydrolysis of alpha-(2-&gt;3)-, alpha-(2-&gt;6)-, alpha-(2-&gt;8)- glycosidic linkages of terminal sialic acid residues in oligosaccharides, glycoproteins, glycolipids, colominic acid and synthetic substrates.. Attaches the virus to alpha-2,3-linked sialic acid-containing cell receptors and thereby initiating infection. Binding of HN protein to the receptor induces a conformational change that allows the F protein to trigger virion/cell membranes fusion. Binds to the glycan motifs sialyl Lewis (SLe) and GM2 ganglioside (GM2-glycan). Functionally, neuraminidase activity ensures the efficient spread of the virus by dissociating the mature virions from the neuraminic acid containing glycoproteins. The polypeptide is Hemagglutinin-neuraminidase (Mumps orthorubulavirus (MuV)).